Reading from the N-terminus, the 202-residue chain is Xanthine phosphoribosyltransferase (202 aa).

Residues Leu20 and Asn27 each coordinate xanthine. A 5-phospho-alpha-D-ribose 1-diphosphate-binding site is contributed by 128 to 132; it reads ANGEA. Lys156 is a binding site for xanthine.

Belongs to the purine/pyrimidine phosphoribosyltransferase family. Xpt subfamily. In terms of assembly, homodimer.

It is found in the cytoplasm. It catalyses the reaction XMP + diphosphate = xanthine + 5-phospho-alpha-D-ribose 1-diphosphate. It participates in purine metabolism; XMP biosynthesis via salvage pathway; XMP from xanthine: step 1/1. In terms of biological role, converts the preformed base xanthine, a product of nucleic acid breakdown, to xanthosine 5'-monophosphate (XMP), so it can be reused for RNA or DNA synthesis. This is Xanthine phosphoribosyltransferase from Alkaliphilus metalliredigens (strain QYMF).